Here is a 377-residue protein sequence, read N- to C-terminus: MSLEPFSKSEALTFGVELELQLVNRHDYDLASASPDLLRMLKGKEYPGDIKPEITDSMIEISTGICHSHDEALWQLREMRDRMAEAATALNIGICGGGTHPFQQWSQRQISQSPRYQYISDLYGYLAKQFTVFGQHVHIGCPNPDDALYLLHAMSRYVPHFIALAASSPFVQGVDTGFASARMNSVSAFPMSGRAPFVLTWDAFIAYFDKMHATGVIESMKDFYWDIRPKPEFGTIEVRVMDTPLTVERAAAIAAYIQALGRWLLLDRPFMPVEDDYLVYTFNRFQACRFGLAGEYVDPATGNRGALADHILETSKLLSAHAEALSSEGALDMVREVVEARDADAEWIRAAQRETRNLHETVRRGCGRWTQAATQPA.

The protein belongs to the glutamate--cysteine ligase type 2 family. YbdK subfamily.

The enzyme catalyses L-cysteine + L-glutamate + ATP = gamma-L-glutamyl-L-cysteine + ADP + phosphate + H(+). In terms of biological role, ATP-dependent carboxylate-amine ligase which exhibits weak glutamate--cysteine ligase activity. This Ralstonia pickettii (strain 12J) protein is Putative glutamate--cysteine ligase 2.